The primary structure comprises 230 residues: Large ribosomal subunit protein uL1 (230 aa).

The protein belongs to the universal ribosomal protein uL1 family. In terms of assembly, part of the 50S ribosomal subunit.

Its function is as follows. Binds directly to 23S rRNA. The L1 stalk is quite mobile in the ribosome, and is involved in E site tRNA release. Protein L1 is also a translational repressor protein, it controls the translation of the L11 operon by binding to its mRNA. The sequence is that of Large ribosomal subunit protein uL1 from Ruminiclostridium cellulolyticum (strain ATCC 35319 / DSM 5812 / JCM 6584 / H10) (Clostridium cellulolyticum).